The following is a 374-amino-acid chain: DNA replication and repair protein RecF (374 aa).

ATP is bound at residue 30 to 37; sequence GENAQGKT.

It belongs to the RecF family.

It localises to the cytoplasm. Functionally, the RecF protein is involved in DNA metabolism; it is required for DNA replication and normal SOS inducibility. RecF binds preferentially to single-stranded, linear DNA. It also seems to bind ATP. The polypeptide is DNA replication and repair protein RecF (Geobacillus sp. (strain WCH70)).